The primary structure comprises 101 residues: Citrinin resistance protein, mitochondrial (101 aa).

The protein localises to the mitochondrion. Its function is as follows. Mitochondrial protein that is involved in citrinin resistance. The protein is Citrinin resistance protein, mitochondrial of Saccharomyces cerevisiae (strain ATCC 204508 / S288c) (Baker's yeast).